Here is a 480-residue protein sequence, read N- to C-terminus: 6-phosphogluconate dehydrogenase, decarboxylating 1 (480 aa).

NADP(+)-binding positions include 10–15 (GLAVMG), 33–35 (NRT), 77–79 (VKA), and asparagine 105. Substrate-binding positions include asparagine 105 and 131–133 (SGG). Lysine 186 acts as the Proton acceptor in catalysis. Residue 189–190 (HN) coordinates substrate. Glutamate 193 acts as the Proton donor in catalysis. Tyrosine 194, lysine 264, arginine 291, arginine 450, and histidine 456 together coordinate substrate.

Belongs to the 6-phosphogluconate dehydrogenase family. In terms of assembly, homodimer. In terms of tissue distribution, highly expressed in inflorescence, lowly expressed in root and embryos and almost absent in leaves.

The protein localises to the cytoplasm. It catalyses the reaction 6-phospho-D-gluconate + NADP(+) = D-ribulose 5-phosphate + CO2 + NADPH. It participates in carbohydrate degradation; pentose phosphate pathway; D-ribulose 5-phosphate from D-glucose 6-phosphate (oxidative stage): step 3/3. Catalyzes the oxidative decarboxylation of 6-phosphogluconate to ribulose 5-phosphate and CO(2), with concomitant reduction of NADP to NADPH. The protein is 6-phosphogluconate dehydrogenase, decarboxylating 1 (G6PGH1) of Oryza sativa subsp. japonica (Rice).